A 466-amino-acid chain; its full sequence is Ribulose bisphosphate carboxylase large chain (466 aa).

The residue at position 4 (lysine 4) is an N6,N6,N6-trimethyllysine. Residues asparagine 113 and threonine 163 each contribute to the substrate site. Lysine 165 functions as the Proton acceptor in the catalytic mechanism. Position 167 (lysine 167) interacts with substrate. 3 residues coordinate Mg(2+): lysine 191, aspartate 193, and glutamate 194. Lysine 191 carries the N6-carboxylysine modification. Histidine 284 (proton acceptor) is an active-site residue. Residues arginine 285, histidine 317, and serine 369 each coordinate substrate.

The protein belongs to the RuBisCO large chain family. Type I subfamily. In terms of assembly, heterohexadecamer of 8 large chains and 8 small chains; disulfide-linked. The disulfide link is formed within the large subunit homodimers. It depends on Mg(2+) as a cofactor. In terms of processing, the disulfide bond which can form in the large chain dimeric partners within the hexadecamer appears to be associated with oxidative stress and protein turnover.

Its subcellular location is the plastid. It is found in the chloroplast. It carries out the reaction 2 (2R)-3-phosphoglycerate + 2 H(+) = D-ribulose 1,5-bisphosphate + CO2 + H2O. The enzyme catalyses D-ribulose 1,5-bisphosphate + O2 = 2-phosphoglycolate + (2R)-3-phosphoglycerate + 2 H(+). RuBisCO catalyzes two reactions: the carboxylation of D-ribulose 1,5-bisphosphate, the primary event in carbon dioxide fixation, as well as the oxidative fragmentation of the pentose substrate in the photorespiration process. Both reactions occur simultaneously and in competition at the same active site. In Ruttya fruticosa (African azalea), this protein is Ribulose bisphosphate carboxylase large chain.